The sequence spans 384 residues: 23S rRNA (uracil(747)-C(5))-methyltransferase RlmC (384 aa).

4 residues coordinate [4Fe-4S] cluster: C7, C15, C18, and C94. Residues Q219, F248, E269, and N316 each contribute to the S-adenosyl-L-methionine site. Catalysis depends on C343, which acts as the Nucleophile.

The protein belongs to the class I-like SAM-binding methyltransferase superfamily. RNA M5U methyltransferase family. RlmC subfamily.

It catalyses the reaction uridine(747) in 23S rRNA + S-adenosyl-L-methionine = 5-methyluridine(747) in 23S rRNA + S-adenosyl-L-homocysteine + H(+). Catalyzes the formation of 5-methyl-uridine at position 747 (m5U747) in 23S rRNA. The protein is 23S rRNA (uracil(747)-C(5))-methyltransferase RlmC of Shewanella sp. (strain MR-4).